A 173-amino-acid chain; its full sequence is ATP-dependent protease subunit HslV (173 aa).

Thr-2 is a catalytic residue. Positions 158, 161, and 164 each coordinate Na(+).

Belongs to the peptidase T1B family. HslV subfamily. In terms of assembly, a double ring-shaped homohexamer of HslV is capped on each side by a ring-shaped HslU homohexamer. The assembly of the HslU/HslV complex is dependent on binding of ATP.

The protein localises to the cytoplasm. It catalyses the reaction ATP-dependent cleavage of peptide bonds with broad specificity.. With respect to regulation, allosterically activated by HslU binding. In terms of biological role, protease subunit of a proteasome-like degradation complex believed to be a general protein degrading machinery. The chain is ATP-dependent protease subunit HslV from Mannheimia succiniciproducens (strain KCTC 0769BP / MBEL55E).